The chain runs to 72 residues: Large ribosomal subunit protein bL31 (72 aa).

Zn(2+) is bound by residues Cys-16, Cys-18, Cys-37, and Cys-40.

It belongs to the bacterial ribosomal protein bL31 family. Type A subfamily. In terms of assembly, part of the 50S ribosomal subunit. Zn(2+) serves as cofactor.

In terms of biological role, binds the 23S rRNA. The sequence is that of Large ribosomal subunit protein bL31 from Buchnera aphidicola subsp. Acyrthosiphon pisum (strain Tuc7).